The primary structure comprises 482 residues: MKFIIKLFPEITIKSQSVRLRFIKILTGNIRNVLKHYDETLAVVRHWDHIEVRAKDESQRSAIRDALTRIPGIHHILEVEDHAYTDVHNIFEQALALYREQLEGKTFCVRVKRRGKHEFSSQDVERYVGGGLNQHIETARVNLTAPQVTVHLEIEQDRLLLIKGRYEGIGGFPIGTQEDVLSLISGGFDSGVSSYMLMRRGCRVHYCFFNLGGAAHEIGVKQVAHYLWNRFGSSHRVRFIAIDFDPVVGEILEKVDDGQMGVVLKRMMVRAASKIAERYGVQALVTGEALGQVSSQTLTNLRLIDNASDTLILRPLISHDKEHIIKQARELGTEDFAKTMPEYCGVISKSPTVKAVKAKIEAEESHFDFAILERVVSEARNIDIRQIAEQTKQEVVEIETVASFAPTDVLLDIRSPDEQDDKPLELDQIEIKSLPFYKLGTQFGDLDQSKTYLLYCERGVMSRLQALYLREQGFSNVKVYRP.

The THUMP domain occupies 61 to 165 (SAIRDALTRI…QDRLLLIKGR (105 aa)). ATP-binding positions include 183–184 (LI), K265, G287, and Q296. C344 and C456 are joined by a disulfide. In terms of domain architecture, Rhodanese spans 404–482 (FAPTDVLLDI…GFSNVKVYRP (79 aa)). C456 acts as the Cysteine persulfide intermediate in catalysis.

Belongs to the ThiI family.

Its subcellular location is the cytoplasm. The enzyme catalyses [ThiI sulfur-carrier protein]-S-sulfanyl-L-cysteine + a uridine in tRNA + 2 reduced [2Fe-2S]-[ferredoxin] + ATP + H(+) = [ThiI sulfur-carrier protein]-L-cysteine + a 4-thiouridine in tRNA + 2 oxidized [2Fe-2S]-[ferredoxin] + AMP + diphosphate. The catalysed reaction is [ThiS sulfur-carrier protein]-C-terminal Gly-Gly-AMP + S-sulfanyl-L-cysteinyl-[cysteine desulfurase] + AH2 = [ThiS sulfur-carrier protein]-C-terminal-Gly-aminoethanethioate + L-cysteinyl-[cysteine desulfurase] + A + AMP + 2 H(+). Its pathway is cofactor biosynthesis; thiamine diphosphate biosynthesis. In terms of biological role, catalyzes the ATP-dependent transfer of a sulfur to tRNA to produce 4-thiouridine in position 8 of tRNAs, which functions as a near-UV photosensor. Also catalyzes the transfer of sulfur to the sulfur carrier protein ThiS, forming ThiS-thiocarboxylate. This is a step in the synthesis of thiazole, in the thiamine biosynthesis pathway. The sulfur is donated as persulfide by IscS. This is tRNA sulfurtransferase from Pectobacterium carotovorum subsp. carotovorum (strain PC1).